The following is a 293-amino-acid chain: Aminodeoxychorismate lyase (293 aa).

Residue Lys146 is modified to N6-(pyridoxal phosphate)lysine.

The protein belongs to the class-IV pyridoxal-phosphate-dependent aminotransferase family. As to quaternary structure, homodimer. The cofactor is pyridoxal 5'-phosphate.

It carries out the reaction 4-amino-4-deoxychorismate = 4-aminobenzoate + pyruvate + H(+). It functions in the pathway cofactor biosynthesis; tetrahydrofolate biosynthesis; 4-aminobenzoate from chorismate: step 2/2. In terms of biological role, involved in the biosynthesis of p-aminobenzoate (PABA), a precursor of tetrahydrofolate. Converts 4-amino-4-deoxychorismate into 4-aminobenzoate (PABA) and pyruvate. This is Aminodeoxychorismate lyase from Bacillus subtilis (strain 168).